A 304-amino-acid polypeptide reads, in one-letter code: MLNAPFELVTSLGFAAFVLLLIALPIAFWSVSSDSRPGVVRLLVAVANLLLTAQLVLRWWQSGHFPISNLYESLCFLAWACTLTQLLVERAWPSPIVAAAATPMGLGCIAFASFALPDQLQSAAPLVPALRSSWLVMHVSVIMVSYAALLVGSLLSLAVLVMDRGEALQLRSSSIGSGGFRQAVTTPDSGFLELQSLEISTNEQLDSLSYRTITVGFLMLTVGIISGAVWANEAWGSYWSWDPKETWALICWLVYAAYLHTRLSRGWQGRRPALVAVVGLIVIAVCYIGVNLLGIGLHSYGWFF.

8 helical membrane passes run 8-28, 37-57, 63-83, 96-116, 141-161, 212-232, 246-263, and 275-295; these read LVTSLGFAAFVLLLIALPIAF, PGVVRLLVAVANLLLTAQLVL, GHFPISNLYESLCFLAWACTL, IVAAAATPMGLGCIAFASFAL, VIMVSYAALLVGSLLSLAVLV, TITVGFLMLTVGIISGAVWAN, TWALICWLVYAAYLHTRL, and VAVVGLIVIAVCYIGVNLLGI.

It belongs to the CcmF/CycK/Ccl1/NrfE/CcsA family. In terms of assembly, may interact with ccs1.

Its subcellular location is the cellular thylakoid membrane. Required during biogenesis of c-type cytochromes (cytochrome c6 and cytochrome f) at the step of heme attachment. This chain is Cytochrome c biogenesis protein CcsA, found in Synechococcus sp. (strain CC9902).